Here is a 66-residue protein sequence, read N- to C-terminus: Conotoxin PnMLCL-01 (66 aa).

Residues 1–19 (MLCLPVFIILLLLASPAAS) form the signal peptide. A propeptide spanning residues 20-45 (NPLEKRIQSDLIRAALEDADTKNDPR) is cleaved from the precursor. At C63 the chain carries Cysteine amide.

The protein belongs to the conotoxin T superfamily. Post-translationally, contains 2 disulfide bonds that can be either 'C1-C3, C2-C4' or 'C1-C4, C2-C3', since these disulfide connectivities have been observed for conotoxins with cysteine framework V (for examples, see AC P0DQQ7 and AC P81755). As to expression, expressed by the venom duct.

Its subcellular location is the secreted. This Conus pennaceus (Feathered cone) protein is Conotoxin PnMLCL-01.